A 424-amino-acid chain; its full sequence is MARSFPPPSALRDFLESESAGGILLIFAAILAMIVANSPLATLYHDLIHAVTGPVLTDKLGPMTVHLWINDGLMAVFFLLVGLEIKREFVDGRLASWDRRRLPFIAAAAGMAVPAALYMFFVGDEPGLAQGWAIPAATDIAFAMGVLALLGRRAPTSLKLFLVTVAIVDDMGAVAIIALFYTAKINLLALGAAAAILGIMFACNRGGVKNLLVYMALFLLLWYAMLLSGVHATIAGVLAAMAIPFERTPGAPDSQTSPLHRLEHALHPTVAFAIVPLFGFANAGVDVRALGLDQLFAPLPLGIAAGLFLGKQIGIFGSVWLAVKLGIAGRLRGATWLQVYAVSMLCGIGFTMSLFIGSLAFPGNALLIEEAKIGILMGSLASALVGFAVLRLAPLHPEHNAVESASKGEIAVDGDVRDTSEAAR.

The next 11 membrane-spanning stretches (helical) occupy residues 23–43 (ILLI…LATL), 65–85 (VHLW…GLEI), 102–122 (LPFI…MFFV), 131–151 (GWAI…ALLG), 160–180 (LFLV…IALF), 183–203 (AKIN…MFAC), 211–231 (LLVY…SGVH), 265–285 (ALHP…NAGV), 303–323 (IAAG…WLAV), 341–361 (AVSM…SLAF), and 373–393 (IGIL…LRLA).

The protein belongs to the NhaA Na(+)/H(+) (TC 2.A.33) antiporter family.

The protein localises to the cell inner membrane. It catalyses the reaction Na(+)(in) + 2 H(+)(out) = Na(+)(out) + 2 H(+)(in). Its function is as follows. Na(+)/H(+) antiporter that extrudes sodium in exchange for external protons. The polypeptide is Na(+)/H(+) antiporter NhaA (Sphingopyxis alaskensis (strain DSM 13593 / LMG 18877 / RB2256) (Sphingomonas alaskensis)).